The chain runs to 825 residues: Heterogeneous nuclear ribonucleoprotein U (825 aa).

Ser2 is subject to N-acetylserine; partial. At Ser4 the chain carries Phosphoserine. Residues 8–42 form the SAP domain; it reads VKKLKVSELKEELKKRRLSDKGLKAELMERLQAAL. N6-acetyllysine occurs at positions 17 and 21. The disordered stretch occupies residues 41 to 281; the sequence is ALDDEEAGGR…PQPPVEEEDE (241 aa). Ser59 is subject to Phosphoserine; by PLK1. The residue at position 66 (Ser66) is a Phosphoserine. The span at 72–81 shows a compositional bias: low complexity; sequence AGLEQEAAAG. 3 stretches are compositionally biased toward acidic residues: residues 82–95, 120–134, and 140–153; these read GDEEEEEEEEEEEG, PMEEEEAASEDENGD, and EGEDELGDEEEGAG. Over residues 159-178 the composition is skewed to low complexity; the sequence is GEQQPQPPATQQQQPQQQRG. N6-acetyllysine is present on Lys186. The residue at position 187 (Ser187) is an ADP-ribosylserine. Over residues 199–211 the composition is skewed to low complexity; that stretch reads APPGARQGQQQAG. Lys215 is modified (N6-acetyllysine). Positions 233–266 are enriched in basic and acidic residues; that stretch reads GKTEQKGGDKKRGVKRPREDHGRGYFEYIEENKY. Arg255 carries the citrulline modification. N6-acetyllysine; alternate is present on Lys265. Lys265 participates in a covalent cross-link: Glycyl lysine isopeptide (Lys-Gly) (interchain with G-Cter in SUMO1); alternate. A Glycyl lysine isopeptide (Lys-Gly) (interchain with G-Cter in SUMO2); alternate cross-link involves residue Lys265. The residue at position 266 (Tyr266) is a Phosphotyrosine. 2 positions are modified to phosphoserine: Ser267 and Ser271. The 198-residue stretch at 267 to 464 folds into the B30.2/SPRY domain; that stretch reads SRAKSPQPPV…VEFNFGQKEK (198 aa). The residue at position 286 (Thr286) is a Phosphothreonine. Position 352 is an N6-acetyllysine (Lys352). Residues 488-672 are ATPase domain; that stretch reads PKGPEEKKDC…QKLLEQYKEE (185 aa). Residue Lys495 forms a Glycyl lysine isopeptide (Lys-Gly) (interchain with G-Cter in SUMO2) linkage. ATP is bound at residue 504–511; the sequence is GLPGAGKT. Residues Lys516 and Lys524 each carry the N6-acetyllysine; alternate modification. Residues Lys516 and Lys524 each participate in a glycyl lysine isopeptide (Lys-Gly) (interchain with G-Cter in SUMO2); alternate cross-link. The residue at position 532 (Thr532) is a Phosphothreonine. Lys536 participates in a covalent cross-link: Glycyl lysine isopeptide (Lys-Gly) (interchain with G-Cter in SUMO2). N6-acetyllysine is present on Lys551. Lys565 is modified (N6-acetyllysine; alternate). Lys565 is covalently cross-linked (Glycyl lysine isopeptide (Lys-Gly) (interchain with G-Cter in SUMO2); alternate). Residue Lys574 forms a Glycyl lysine isopeptide (Lys-Gly) (interchain with G-Cter in SUMO2) linkage. At Thr582 the chain carries Phosphothreonine. Residues Lys609 and Lys626 each participate in a glycyl lysine isopeptide (Lys-Gly) (interchain with G-Cter in SUMO2) cross-link. Residues 611–626 are actin-binding; it reads EDYKQRTQKKAEVEGK. At Lys635 the chain carries N6-acetyllysine; alternate. Residue Lys635 forms a Glycyl lysine isopeptide (Lys-Gly) (interchain with G-Cter in SUMO2); alternate linkage. Residues Lys664 and Lys670 each participate in a glycyl lysine isopeptide (Lys-Gly) (interchain with G-Cter in SUMO2) cross-link. Positions 671-683 are enriched in basic and acidic residues; that stretch reads EESKKALPPEKKQ. The interval 671–749 is disordered; that stretch reads EESKKALPPE…GGGGGGSGGI (79 aa). Arg702 bears the Omega-N-methylarginine mark. Residues 710 to 728 show a composition bias toward gly residues; the sequence is GGFNMRGGNFRGGAPGNRG. The interval 714–739 is RNA-binding RGG-box; the sequence is MRGGNFRGGAPGNRGGYNRRGNMPQR. 3 positions are modified to asymmetric dimethylarginine: Arg715, Arg720, and Arg727. An asymmetric dimethylarginine; alternate mark is found at Arg733 and Arg739. Arg733 and Arg739 each carry omega-N-methylarginine; alternate. Arg739 carries the post-translational modification Dimethylated arginine; in A2780 ovarian carcinoma cell line. Gly residues predominate over residues 739 to 749; sequence RGGGGGGSGGI. Arg755 and Arg762 each carry asymmetric dimethylarginine. Residues 769-799 are disordered; the sequence is GNYNRGGMPNRGNYNQNFRGRGNNRGYKNQS. Residues 778 to 799 show a composition bias toward low complexity; that stretch reads NRGNYNQNFRGRGNNRGYKNQS. Lys814 is modified (N6-acetyllysine; alternate). Lys814 is covalently cross-linked (Glycyl lysine isopeptide (Lys-Gly) (interchain with G-Cter in SUMO2); alternate).

As to quaternary structure, oligomer (via ATPase domain and RNA-binding RGG-box region); oligomerization occurs upon ATP-binding in a chromatin-associated RNAs (caRNAs)- and transcription-dependent manner and is required for chromatin decompaction. ATP hydrolysis is required to cycle from an oligomeric to monomeric state to compact chromatin. Component of the coding region determinant (CRD)-mediated complex, composed of DHX9, HNRNPU, IGF2BP1, SYNCRIP and YBX1. Identified in the spliceosome C complex. Identified in a IGF2BP1-dependent mRNP granule complex containing untranslated mRNAs. Associates with heterogeneous nuclear ribonucleoprotein (hnRNP) particles. Associates (via middle region) with the C-terminal domain (CTD) RNA polymerase II (Pol II) holoenzyme; this association occurs in a RNA-independent manner. Associates (via middle region) with the core-TFIIH basal transcription factor complex; this association inhibits the CTD phosphorylation of RNA polymerase II holoenzyme by down-regulating TFIIH kinase activity. Associates with the telomerase holoenzyme complex. Associates with spindle microtubules (MTs) in a TPX2-dependent manner. Interacts (via C-terminus) with actin; this interaction is direct and mediates association with the phosphorylated CTD of RNA polymerase II and is disrupted in presence of the long non-coding H19 RNA. Interacts with AURKA. Interacts (via C-terminus) with CBX5; this interaction is, at least in part, RNA-dependent. Interacts with CR2. Interacts with CRY1. Interacts (via C-terminus) with EP300; this interaction enhances DNA-binding to nuclear scaffold/matrix attachment region (S/MAR) elements. Interacts with ERBB4. Interacts with GEMIN5. Interacts with IGF2BP1. Interacts with IGF2BP2 and IGF2BP3. Interacts with NCL; this interaction occurs during mitosis. Interacts (via C-terminus) with NR3C1 (via C-terminus). Interacts with PLK1; this interaction induces phosphorylation of HNRNPU at Ser-59 in mitosis. Interacts with POU3F4. Interacts with SMARCA4; this interaction occurs in embryonic stem cells and stimulates global Pol II-mediated transcription. Interacts (via C-terminus) with TOP2A; this interaction protects the topoisomerase TOP2A from degradation and positively regulates the relaxation of supercoiled DNA by TOP2A in a RNA-dependent manner. Interacts with TPX2; this interaction recruits HNRNPU to spindle microtubules (MTs). Interacts with UBQLN2. Interacts (via RNA-binding RGG-box region) with ZBTB7B; the interaction facilitates the recruitment of long non-coding RNA Blnc1 by ZBTB7B. Interacts with ERCC6. In terms of assembly, (Microbial infection) Interacts with HIV-1 protein Rev. Cleaved at Asp-100 by CASP3 during T-cell apoptosis, resulting in a loss of DNA- and chromatin-binding activities. Post-translationally, extensively phosphorylated. Phosphorylated on Ser-59 by PLK1 and dephosphorylated by protein phosphatase 2A (PP2A) in mitosis. In terms of processing, arg-739 is dimethylated, probably to asymmetric dimethylarginine. Arg-733 is dimethylated, probably to asymmetric dimethylarginine. Citrullinated by PADI4. In terms of tissue distribution, widely expressed.

Its subcellular location is the nucleus. It localises to the nucleus matrix. The protein localises to the chromosome. The protein resides in the nucleus speckle. It is found in the cytoplasm. Its subcellular location is the cytoskeleton. It localises to the microtubule organizing center. The protein localises to the centrosome. The protein resides in the centromere. It is found in the kinetochore. Its subcellular location is the spindle. It localises to the spindle pole. The protein localises to the midbody. The protein resides in the cell surface. It is found in the cytoplasmic granule. Its function is as follows. DNA- and RNA-binding protein involved in several cellular processes such as nuclear chromatin organization, telomere-length regulation, transcription, mRNA alternative splicing and stability, Xist-mediated transcriptional silencing and mitotic cell progression. Plays a role in the regulation of interphase large-scale gene-rich chromatin organization through chromatin-associated RNAs (caRNAs) in a transcription-dependent manner, and thereby maintains genomic stability. Required for the localization of the long non-coding Xist RNA on the inactive chromosome X (Xi) and the subsequent initiation and maintenance of X-linked transcriptional gene silencing during X-inactivation. Plays a role as a RNA polymerase II (Pol II) holoenzyme transcription regulator. Promotes transcription initiation by direct association with the core-TFIIH basal transcription factor complex for the assembly of a functional pre-initiation complex with Pol II in a actin-dependent manner. Blocks Pol II transcription elongation activity by inhibiting the C-terminal domain (CTD) phosphorylation of Pol II and dissociates from Pol II pre-initiation complex prior to productive transcription elongation. Positively regulates CBX5-induced transcriptional gene silencing and retention of CBX5 in the nucleus. Negatively regulates glucocorticoid-mediated transcriptional activation. Key regulator of transcription initiation and elongation in embryonic stem cells upon leukemia inhibitory factor (LIF) signaling. Involved in the long non-coding RNA H19-mediated Pol II transcriptional repression. Participates in the circadian regulation of the core clock component BMAL1 transcription. Plays a role in the regulation of telomere length. Plays a role as a global pre-mRNA alternative splicing modulator by regulating U2 small nuclear ribonucleoprotein (snRNP) biogenesis. Plays a role in mRNA stability. Component of the CRD-mediated complex that promotes MYC mRNA stabilization. Enhances the expression of specific genes, such as tumor necrosis factor TNFA, by regulating mRNA stability, possibly through binding to the 3'-untranslated region (UTR). Plays a role in mitotic cell cycle regulation. Involved in the formation of stable mitotic spindle microtubules (MTs) attachment to kinetochore, spindle organization and chromosome congression. Phosphorylation at Ser-59 by PLK1 is required for chromosome alignement and segregation and progression through mitosis. Also contributes to the targeting of AURKA to mitotic spindle MTs. Binds to double- and single-stranded DNA and RNA, poly(A), poly(C) and poly(G) oligoribonucleotides. Binds to chromatin-associated RNAs (caRNAs). Associates with chromatin to scaffold/matrix attachment region (S/MAR) elements in a chromatin-associated RNAs (caRNAs)-dependent manner. Binds to the Xist RNA. Binds the long non-coding H19 RNA. Binds to SMN1/2 pre-mRNAs at G/U-rich regions. Binds to small nuclear RNAs (snRNAs). Binds to the 3'-UTR of TNFA mRNA. Binds (via RNA-binding RGG-box region) to the long non-coding Xist RNA; this binding is direct and bridges the Xist RNA and the inactive chromosome X (Xi). Also negatively regulates embryonic stem cell differentiation upon LIF signaling. Required for embryonic development. Binds to brown fat long non-coding RNA 1 (Blnc1); facilitates the recruitment of Blnc1 by ZBTB7B required to drive brown and beige fat development and thermogenesis. (Microbial infection) Negatively regulates immunodeficiency virus type 1 (HIV-1) replication by preventing the accumulation of viral mRNA transcripts in the cytoplasm. The chain is Heterogeneous nuclear ribonucleoprotein U from Homo sapiens (Human).